The chain runs to 519 residues: Bifunctional pantoate ligase/cytidylate kinase (519 aa).

The segment at 1–282 (MNLTILRTKT…CGNTRLIDHG (282 aa)) is pantoate--beta-alanine ligase. 30-37 (MGGLHQGH) contributes to the ATP binding site. Histidine 37 serves as the catalytic Proton donor. Position 66 (glutamine 66) interacts with (R)-pantoate. Glutamine 66 lines the beta-alanine pocket. Residue 155–158 (GEKD) participates in ATP binding. Residue glutamine 161 coordinates (R)-pantoate. Residue 192–195 (CSSR) coordinates ATP. The tract at residues 283–519 (FLMKRNPIVA…PQEVWPTNAT (237 aa)) is cytidylate kinase.

It in the N-terminal section; belongs to the pantothenate synthetase family. This sequence in the C-terminal section; belongs to the cytidylate kinase family. Type 1 subfamily.

It is found in the cytoplasm. It catalyses the reaction (R)-pantoate + beta-alanine + ATP = (R)-pantothenate + AMP + diphosphate + H(+). It carries out the reaction CMP + ATP = CDP + ADP. The catalysed reaction is dCMP + ATP = dCDP + ADP. The protein operates within cofactor biosynthesis; (R)-pantothenate biosynthesis; (R)-pantothenate from (R)-pantoate and beta-alanine: step 1/1. Catalyzes the condensation of pantoate with beta-alanine in an ATP-dependent reaction via a pantoyl-adenylate intermediate. Its function is as follows. Catalyzes the transfer of a phosphate group from ATP to either CMP or dCMP to form CDP or dCDP and ADP, respectively. This is Bifunctional pantoate ligase/cytidylate kinase from Prochlorococcus marinus (strain SARG / CCMP1375 / SS120).